We begin with the raw amino-acid sequence, 202 residues long: Imidazoleglycerol-phosphate dehydratase (202 aa).

Belongs to the imidazoleglycerol-phosphate dehydratase family.

The protein localises to the cytoplasm. It catalyses the reaction D-erythro-1-(imidazol-4-yl)glycerol 3-phosphate = 3-(imidazol-4-yl)-2-oxopropyl phosphate + H2O. It participates in amino-acid biosynthesis; L-histidine biosynthesis; L-histidine from 5-phospho-alpha-D-ribose 1-diphosphate: step 6/9. This chain is Imidazoleglycerol-phosphate dehydratase, found in Acinetobacter baumannii (strain AYE).